A 361-amino-acid chain; its full sequence is uncharacterized protein (361 aa).

Disordered stretches follow at residues 53 to 75 (KNIS…NINN) and 150 to 211 (NYNN…YHHY). The segment covering 150–198 (NYNNYNNNNNNNNNNNNNNNNNNNNNNNNNNNNNNKNNNKNNNNKPNNF) has biased composition (low complexity). Positions 199–211 (IHHHHHHHHYHHY) are enriched in basic residues. Residues 225-245 (IFIGLMAFLILFILMVIGLLI) traverse the membrane as a helical segment.

The protein resides in the membrane. This is an uncharacterized protein from Dictyostelium discoideum (Social amoeba).